Reading from the N-terminus, the 104-residue chain is Putative membrane protein insertion efficiency factor (104 aa).

The disordered stretch occupies residues 83–104 (SSPTPLAESPDDRTVPHTQETS).

The protein belongs to the UPF0161 family.

Its subcellular location is the cell inner membrane. Could be involved in insertion of integral membrane proteins into the membrane. The polypeptide is Putative membrane protein insertion efficiency factor (Chlamydia trachomatis serovar D (strain ATCC VR-885 / DSM 19411 / UW-3/Cx)).